Reading from the N-terminus, the 248-residue chain is Ribonuclease PH (248 aa).

Phosphate is bound by residues Arg-86 and 124 to 126; that span reads GTR.

Belongs to the RNase PH family. As to quaternary structure, homohexameric ring arranged as a trimer of dimers.

It carries out the reaction tRNA(n+1) + phosphate = tRNA(n) + a ribonucleoside 5'-diphosphate. In terms of biological role, phosphorolytic 3'-5' exoribonuclease that plays an important role in tRNA 3'-end maturation. Removes nucleotide residues following the 3'-CCA terminus of tRNAs; can also add nucleotides to the ends of RNA molecules by using nucleoside diphosphates as substrates, but this may not be physiologically important. Probably plays a role in initiation of 16S rRNA degradation (leading to ribosome degradation) during starvation. The protein is Ribonuclease PH of Clostridium perfringens (strain SM101 / Type A).